We begin with the raw amino-acid sequence, 402 residues long: Multidrug resistance protein MdtH (402 aa).

At 1 to 12 (MSRVSQARNLGK) the chain is on the cytoplasmic side. A helical transmembrane segment spans residues 13–33 (YFLLIDNMLVVLGFFVVFPLI). Residues 34–98 (SIRFVDQMGW…GFATMGIAHE (65 aa)) lie on the Periplasmic side of the membrane. Residues 99–116 (PWLLWFSCLLSGLGGTLF) form a helical membrane-spanning segment. Residues 117–138 (DPPRSALVVKLIRPQQRGRFFS) lie on the Cytoplasmic side of the membrane. A helical transmembrane segment spans residues 139-159 (LLMMQDSAGAVIGALLGSWLL). Residues 160 to 164 (QYDFR) are Periplasmic-facing. Residues 165–185 (LVCATGAVLFVLCAAFNAWLL) traverse the membrane as a helical segment. At 186 to 213 (PAWKLSTVRTPVREGMTRVMRDKRFVTY) the chain is on the cytoplasmic side. A helical transmembrane segment spans residues 214-234 (VLTLAGYYMLAVQVMLMLPIM). Over 235-243 (VNDVAGAPS) the chain is Periplasmic. A helical membrane pass occupies residues 244-264 (AVKWMYAIEACLSLTLLYPIA). The Cytoplasmic portion of the chain corresponds to 265-276 (RWSEKHFRLEHR). A helical transmembrane segment spans residues 277–297 (LMAGLLIMSLSMMPVGMVSGL). At 298 to 299 (QQ) the chain is on the periplasmic side. A helical membrane pass occupies residues 300 to 320 (LFNLICLFYIGSIIAEPARET). Over 321 to 339 (LSASLADARARGSYMGFSR) the chain is Cytoplasmic. Residues 340-360 (LGLAIGGAIGYIGGGWLFDLG) form a helical membrane-spanning segment. Topologically, residues 361–367 (KSAHQPE) are periplasmic. The helical transmembrane segment at 368–388 (LPWMMLGIIGIFTFLALGWQF) threads the bilayer. The Cytoplasmic segment spans residues 389-402 (SQKRAARRLLERDA).

This sequence belongs to the major facilitator superfamily. DHA1 family. MdtH (TC 2.A.1.2.21) subfamily.

The protein localises to the cell inner membrane. Confers resistance to norfloxacin and enoxacin. The sequence is that of Multidrug resistance protein MdtH from Escherichia coli O9:H4 (strain HS).